Reading from the N-terminus, the 657-residue chain is 1-deoxy-D-xylulose-5-phosphate synthase (657 aa).

Residues histidine 73 and 113–115 each bind thiamine diphosphate; that span reads SHA. Residue aspartate 145 participates in Mg(2+) binding. Thiamine diphosphate is bound by residues 146–147, asparagine 175, tyrosine 293, and glutamate 375; that span reads GA. Asparagine 175 serves as a coordination point for Mg(2+).

This sequence belongs to the transketolase family. DXPS subfamily. Homodimer. Requires Mg(2+) as cofactor. Thiamine diphosphate serves as cofactor.

It carries out the reaction D-glyceraldehyde 3-phosphate + pyruvate + H(+) = 1-deoxy-D-xylulose 5-phosphate + CO2. It participates in metabolic intermediate biosynthesis; 1-deoxy-D-xylulose 5-phosphate biosynthesis; 1-deoxy-D-xylulose 5-phosphate from D-glyceraldehyde 3-phosphate and pyruvate: step 1/1. Its function is as follows. Catalyzes the acyloin condensation reaction between C atoms 2 and 3 of pyruvate and glyceraldehyde 3-phosphate to yield 1-deoxy-D-xylulose-5-phosphate (DXP). This Paenarthrobacter aurescens (strain TC1) protein is 1-deoxy-D-xylulose-5-phosphate synthase.